Consider the following 1186-residue polypeptide: Pumilio homolog 1 (1186 aa).

N-acetylserine is present on serine 2. Serine 19 is modified (phosphoserine). The tract at residues 22–73 (LKHHPQEPANPNMPVVLTSGTGSQAQPQPAANQALAAGTHSSPVPGSIGVAG) is disordered. The segment covering 45 to 58 (QAQPQPAANQALAA) has biased composition (low complexity). Phosphoserine is present on residues serine 75, serine 98, and serine 106. Residue threonine 112 is modified to Phosphothreonine. Serine 124, serine 159, serine 197, serine 209, and serine 229 each carry phosphoserine. The disordered stretch occupies residues 233–272 (SCLRKGGFGPRDADSDENDKGEKKNKGTFDGDKLGDLKEE). The span at 250–272 (NDKGEKKNKGTFDGDKLGDLKEE) shows a compositional bias: basic and acidic residues. Serine 305 is modified (phosphoserine). Residues 485 to 502 (TNSANQQTTPQAQQGQQQ) are compositionally biased toward low complexity. 2 disordered regions span residues 485–524 (TNSA…GQQT) and 613–648 (AGTT…FYGN). The span at 511–524 (RPLTPNQNQQGQQT) shows a compositional bias: polar residues. Threonine 514 carries the post-translational modification Phosphothreonine. Residues 626–639 (QQPQPQPQQQPNNN) are compositionally biased toward low complexity. Phosphoserine occurs at positions 709 and 714. Positions 742-773 (GPVGMPLPSQGPGHSQTPPPSLSSHGSSSSLN) are disordered. Residues 763-773 (LSSHGSSSSLN) show a composition bias toward low complexity. Arginine 796 is subject to Omega-N-methylarginine. Phosphoserine is present on residues serine 806 and serine 822. The 341-residue stretch at 828 to 1168 (GRSRLLEDFR…HILAKLEKYY (341 aa)) folds into the PUM-HD domain. Pumilio repeat units follow at residues 848–883 (EIAG…LVFN), 884–919 (EILQ…ALAE), 920–955 (RIRG…EMVR), 956–991 (ELDG…FIID), 992–1027 (AFKG…PILE), 1028–1063 (ELHQ…KIVA), 1064–1099 (EIRG…VLID), and 1103–1142 (TMND…IVMH). The tract at residues 863-867 (SRFIQ) is adenine-nucleotide binding in RNA target. Positions 899–903 (NYVIQ) are uracil-nucleotide binding in RNA target. The adenine-nucleotide binding in RNA target stretch occupies residues 935–939 (CRVIQ). Residues 971–975 (NHVVQ) form a non-specific-nucleotide binding in RNA target region. Residues 1007–1011 (CRVIQ) are adenine-nucleotide binding in RNA target. The segment at 1043-1047 (NYVIQ) is uracil-nucleotide binding in RNA target. The tract at residues 1079 to 1083 (SNVVE) is guanine-nucleotide binding in RNA target. The uracil-nucleotide binding in RNA target stretch occupies residues 1122–1126 (NYVVQ).

Recruits the CCR4-POP2-NOT deadenylase leading to translational inhibition and mRNA degradation. In case of viral infection, interacts with DHX58. Interacts with TRIM71 (via NHL repeats) in an RNA-dependent manner. Post-translationally, phosphorylation at Ser-714 promotes RNA-binding activity. Following growth factor stimulation phosphorylated at Ser-714, promoting binding to the 3'-UTR of CDKN1B/p27 mRNA. Expressed in brain, heart, kidney, muscle, intestine and stomach. Not expressed in cerebellum, corpus callosum, caudate nucleus, hippocampus, medulla oblongata and putamen. Expressed in all fetal tissues tested.

The protein resides in the cytoplasm. It localises to the P-body. Its subcellular location is the cytoplasmic granule. In terms of biological role, sequence-specific RNA-binding protein that acts as a post-transcriptional repressor by binding the 3'-UTR of mRNA targets. Binds to an RNA consensus sequence, the Pumilio Response Element (PRE), 5'-UGUANAUA-3', that is related to the Nanos Response Element (NRE). Mediates post-transcriptional repression of transcripts via different mechanisms: acts via direct recruitment of the CCR4-POP2-NOT deadenylase leading to translational inhibition and mRNA degradation. Also mediates deadenylation-independent repression by promoting accessibility of miRNAs. Following growth factor stimulation, phosphorylated and binds to the 3'-UTR of CDKN1B/p27 mRNA, inducing a local conformational change that exposes miRNA-binding sites, promoting association of miR-221 and miR-222, efficient suppression of CDKN1B/p27 expression, and rapid entry to the cell cycle. Acts as a post-transcriptional repressor of E2F3 mRNAs by binding to its 3'-UTR and facilitating miRNA regulation. Represses a program of genes necessary to maintain genomic stability such as key mitotic, DNA repair and DNA replication factors. Its ability to repress those target mRNAs is regulated by the lncRNA NORAD (non-coding RNA activated by DNA damage) which, due to its high abundance and multitude of PUMILIO binding sites, is able to sequester a significant fraction of PUM1 and PUM2 in the cytoplasm. Involved in neuronal functions by regulating ATXN1 mRNA levels: acts by binding to the 3'-UTR of ATXN1 transcripts, leading to their down-regulation independently of the miRNA machinery. Plays a role in cytoplasmic sensing of viral infection. In testis, acts as a post-transcriptional regulator of spermatogenesis by binding to the 3'-UTR of mRNAs coding for regulators of p53/TP53. Involved in embryonic stem cell renewal by facilitating the exit from the ground state: acts by targeting mRNAs coding for naive pluripotency transcription factors and accelerates their down-regulation at the onset of differentiation. Binds specifically to miRNA MIR199A precursor, with PUM2, regulates miRNA MIR199A expression at a postranscriptional level. This is Pumilio homolog 1 from Homo sapiens (Human).